Reading from the N-terminus, the 450-residue chain is tRNA modification GTPase MnmE (450 aa).

Positions 25, 86, and 126 each coordinate (6S)-5-formyl-5,6,7,8-tetrahydrofolate. The region spanning 221 to 373 (GLRVALVGRP…LVQALLERCG (153 aa)) is the TrmE-type G domain. Asn231 is a binding site for K(+). GTP contacts are provided by residues 231 to 236 (NVGKSS), 250 to 256 (TDLPGTT), 275 to 278 (DTAG), and 336 to 339 (NKAD). Ser235 is a Mg(2+) binding site. K(+)-binding residues include Thr250, Leu252, and Thr255. Residue Thr256 participates in Mg(2+) binding. Lys450 serves as a coordination point for (6S)-5-formyl-5,6,7,8-tetrahydrofolate.

This sequence belongs to the TRAFAC class TrmE-Era-EngA-EngB-Septin-like GTPase superfamily. TrmE GTPase family. In terms of assembly, homodimer. Heterotetramer of two MnmE and two MnmG subunits. K(+) serves as cofactor.

It localises to the cytoplasm. Functionally, exhibits a very high intrinsic GTPase hydrolysis rate. Involved in the addition of a carboxymethylaminomethyl (cmnm) group at the wobble position (U34) of certain tRNAs, forming tRNA-cmnm(5)s(2)U34. The chain is tRNA modification GTPase MnmE from Synechococcus sp. (strain CC9605).